The sequence spans 206 residues: Large ribosomal subunit protein uL4 (206 aa).

The disordered stretch occupies residues 46-77 (GTRAQKDREQVRHSTKKPFKQKGTGNARAGMT).

Belongs to the universal ribosomal protein uL4 family. As to quaternary structure, part of the 50S ribosomal subunit.

One of the primary rRNA binding proteins, this protein initially binds near the 5'-end of the 23S rRNA. It is important during the early stages of 50S assembly. It makes multiple contacts with different domains of the 23S rRNA in the assembled 50S subunit and ribosome. Its function is as follows. Forms part of the polypeptide exit tunnel. The protein is Large ribosomal subunit protein uL4 of Paracidovorax citrulli (strain AAC00-1) (Acidovorax citrulli).